The chain runs to 326 residues: MYGIEYTTILTILISIVLLNYILKSITSMMDFIIYRFLLVFVIVLPFIKAQNYGINLPITGSMDTAYVNSTQQESFMTSTLCLYYPNSVTTEITDPDWTHTLSQLFLTKGWPTNSVYFKSYADIASFSVNPQLYCDYNIVLVQYQNSLALDVSELADLILNEWLCNPMDVTLYYYQQTDEANKWISMGDSCTVKVCPLNMQTLGIGCTTTDVATFEEVANAEKLVITDVVDGVNHKINITLNTCTIQNCKKLGPRENVAIIQVGGSDIIDITADPTTIPQTERIMRINWKKWWQVFYTVVDYINQIVQVMSKRSRSLNSAAFYYRI.

Positions 1-50 (MYGIEYTTILTILISIVLLNYILKSITSMMDFIIYRFLLVFVIVLPFIKA) are cleaved as a signal peptide. Residue Asn69 is glycosylated (N-linked (GlcNAc...) asparagine; by host). 4 disulfides stabilise this stretch: Cys82/Cys135, Cys165/Cys249, Cys191/Cys244, and Cys196/Cys207. Asp95 serves as a coordination point for Ca(2+). The segment at 165-167 (CNP) is CNP motif; interaction with ITGAV/ITGB3. Ca(2+) is bound by residues Gln177, Gly206, Thr214, Glu216, Asp228, Val229, and Asp231. A glycan (N-linked (GlcNAc...) asparagine; by host) is linked at Asn238. Residues 253–255 (GPR) form a GPR motif; interaction with ITGAX/ITGB2 region. Asp301 provides a ligand contact to Ca(2+).

It belongs to the rotavirus VP7 family. In terms of assembly, homotrimer; disulfide-linked. 2 Ca(2+) ions bound at each subunit interface in the trimer hold the trimer together. Interacts with the intermediate capsid protein VP6. Interacts with the outer capsid protein VP5*. Post-translationally, N-glycosylated. In terms of processing, the N-terminus is blocked possibly by pyroglutamic acid.

The protein resides in the virion. It localises to the host endoplasmic reticulum lumen. Functionally, calcium-binding protein that interacts with rotavirus cell receptors once the initial attachment by VP4 has been achieved. Rotavirus attachment and entry into the host cell probably involves multiple sequential contacts between the outer capsid proteins VP4 and VP7, and the cell receptors. Following entry into the host cell, low intracellular or intravesicular Ca(2+) concentration probably causes the calcium-stabilized VP7 trimers to dissociate from the virion. This step is probably necessary for the membrane-disrupting entry step and the release of VP4, which is locked onto the virion by VP7. This chain is Outer capsid glycoprotein VP7, found in Homo sapiens (Human).